The chain runs to 367 residues: Probable alcohol dehydrogenase adh (367 aa).

C43, H64, C97, C100, C103, C111, and N163 together coordinate Zn(2+).

Belongs to the zinc-containing alcohol dehydrogenase family. Zn(2+) serves as cofactor.

It carries out the reaction a primary alcohol + NAD(+) = an aldehyde + NADH + H(+). The catalysed reaction is a secondary alcohol + NAD(+) = a ketone + NADH + H(+). This chain is Probable alcohol dehydrogenase adh (adh), found in Mycobacterium tuberculosis (strain CDC 1551 / Oshkosh).